The sequence spans 380 residues: Queuine tRNA-ribosyltransferase (380 aa).

Residue aspartate 95 is the Proton acceptor of the active site. Substrate-binding positions include aspartate 95–phenylalanine 99, aspartate 149, glutamine 192, and glycine 219. The RNA binding stretch occupies residues glycine 250 to alanine 256. The active-site Nucleophile is the aspartate 269. An RNA binding; important for wobble base 34 recognition region spans residues threonine 274–arginine 278. Residues cysteine 307, cysteine 309, cysteine 312, and histidine 338 each contribute to the Zn(2+) site.

This sequence belongs to the queuine tRNA-ribosyltransferase family. In terms of assembly, homodimer. Within each dimer, one monomer is responsible for RNA recognition and catalysis, while the other monomer binds to the replacement base PreQ1. The cofactor is Zn(2+).

The catalysed reaction is 7-aminomethyl-7-carbaguanine + guanosine(34) in tRNA = 7-aminomethyl-7-carbaguanosine(34) in tRNA + guanine. It participates in tRNA modification; tRNA-queuosine biosynthesis. In terms of biological role, catalyzes the base-exchange of a guanine (G) residue with the queuine precursor 7-aminomethyl-7-deazaguanine (PreQ1) at position 34 (anticodon wobble position) in tRNAs with GU(N) anticodons (tRNA-Asp, -Asn, -His and -Tyr). Catalysis occurs through a double-displacement mechanism. The nucleophile active site attacks the C1' of nucleotide 34 to detach the guanine base from the RNA, forming a covalent enzyme-RNA intermediate. The proton acceptor active site deprotonates the incoming PreQ1, allowing a nucleophilic attack on the C1' of the ribose to form the product. After dissociation, two additional enzymatic reactions on the tRNA convert PreQ1 to queuine (Q), resulting in the hypermodified nucleoside queuosine (7-(((4,5-cis-dihydroxy-2-cyclopenten-1-yl)amino)methyl)-7-deazaguanosine). This is Queuine tRNA-ribosyltransferase from Latilactobacillus sakei subsp. sakei (strain 23K) (Lactobacillus sakei subsp. sakei).